A 776-amino-acid chain; its full sequence is Microtubule-associated protein tau (776 aa).

A compositionally biased stretch (basic and acidic residues) spans 1-26 (MAEPRQEFEVMEDHAGTYGLGDRKDQ). The interval 1 to 591 (MAEPRQEFEV…PVPMPDLKNV (591 aa)) is disordered. Alanine 2 carries the post-translational modification N-acetylalanine. Phosphotyrosine is present on residues tyrosine 18 and tyrosine 29. Lysine 44 participates in a covalent cross-link: Glycyl lysine isopeptide (Lys-Gly) (interchain with G-Cter in ubiquitin). A phosphoserine mark is found at serine 46 and serine 61. The segment covering 61–71 (SETSDAKSTPT) has biased composition (polar residues). Threonine 69, threonine 71, and threonine 111 each carry phosphothreonine. Composition is skewed to basic and acidic residues over residues 179–189 (EGGRHAPELLK) and 207–216 (GGKERPGSKE). Serine 214 is modified (phosphoserine). Residues 217-228 (EVDEDRDVDESS) are compositionally biased toward acidic residues. 2 stretches are compositionally biased toward basic and acidic residues: residues 293 to 303 (KGQDAHLEFTF) and 314 to 323 (EQAHSEEHLG). A compositionally biased stretch (low complexity) spans 324-340 (RAAFPGAPGEGPEARGP). Basic and acidic residues-rich tracts occupy residues 344-356 (EDTK…EPSE) and 381-393 (KSKD…DKKA). A compositionally biased stretch (polar residues) spans 440–452 (KYVSSVTPRTGSS). The segment covering 455-466 (KEMKLKGADGKT) has biased composition (basic and acidic residues). Position 470 is a phosphothreonine (threonine 470). At arginine 472 the chain carries Omega-N-methylarginine. N6,N6-dimethyllysine; alternate is present on lysine 480. Lysine 480 bears the N6-acetyllysine; alternate mark. Residues threonine 486, threonine 492, and threonine 498 each carry the phosphothreonine modification. A phosphoserine mark is found at serine 502, serine 526, and serine 530. Over residues 517–528 (RSERGEPPKSGD) the composition is skewed to basic and acidic residues. The span at 529-549 (RSGYSSPGSPGTPGSRSRTPS) shows a compositional bias: low complexity. Phosphotyrosine is present on tyrosine 532. Serine 533, serine 534, and serine 537 each carry phosphoserine. Phosphothreonine occurs at positions 540 and 547. Serine 549 is modified (phosphoserine). Phosphothreonine is present on threonine 552. The residue at position 560 (lysine 560) is an N6-acetyllysine. Position 566 is a phosphothreonine (threonine 566). Phosphoserine occurs at positions 570 and 572. Tau/MAP repeat units lie at residues 579 to 609 (QTAP…GGGK), 610 to 640 (VQII…GGGS), 641 to 671 (VQIV…GGGQ), and 672 to 703 (VEVK…GGGN). Lysine 589 participates in a covalent cross-link: Glycyl lysine isopeptide (Lys-Gly) (interchain with G-Cter in ubiquitin). Lysine 594 carries the N6-acetyllysine; alternate modification. Lysine 594 carries the post-translational modification N6-methyllysine; alternate. Residue lysine 594 forms a Glycyl lysine isopeptide (Lys-Gly) (interchain with G-Cter in ubiquitin); alternate linkage. Position 597 is a phosphoserine (serine 597). A Glycyl lysine isopeptide (Lys-Gly) (interchain with G-Cter in ubiquitin) cross-link involves residue lysine 602. Lysine 616 carries the post-translational modification N6-acetyllysine; alternate. Lysine 616 participates in a covalent cross-link: Glycyl lysine isopeptide (Lys-Gly) (interchain with G-Cter in ubiquitin); alternate. Residues serine 620 and serine 624 each carry the phosphoserine modification. Lysine 625 is subject to N6-acetyllysine. Position 628 is a phosphoserine (serine 628). N6-acetyllysine; alternate is present on lysine 633. Residue lysine 633 forms a Glycyl lysine isopeptide (Lys-Gly) (interchain with G-Cter in ubiquitin); alternate linkage. Residue serine 640 is modified to Phosphoserine. Lysine 646 carries the post-translational modification N6,N6-dimethyllysine; alternate. N6-acetyllysine; alternate is present on residues lysine 646, lysine 652, and lysine 656. Residues lysine 646, lysine 652, and lysine 656 each participate in a glycyl lysine isopeptide (Lys-Gly) (interchain with G-Cter in ubiquitin); alternate cross-link. Residue serine 659 is modified to Phosphoserine. 3 positions are modified to N6-acetyllysine; alternate: lysine 666, lysine 678, and lysine 682. Glycyl lysine isopeptide (Lys-Gly) (interchain with G-Cter in ubiquitin); alternate cross-links involve residues lysine 666, lysine 678, and lysine 682. Arginine 684 carries the omega-N-methylarginine modification. At serine 687 the chain carries Phosphoserine. Residue lysine 688 forms a Glycyl lysine isopeptide (Lys-Gly) (interchain with G-Cter in ubiquitin) linkage. Serine 691 carries the post-translational modification Phosphoserine. The residue at position 704 (lysine 704) is an N6-acetyllysine; alternate. Residue lysine 704 forms a Glycyl lysine isopeptide (Lys-Gly) (interchain with G-Cter in ubiquitin); alternate linkage. A Glycyl lysine isopeptide (Lys-Gly) (interchain with G-Cter in ubiquitin) cross-link involves residue lysine 710. The residue at position 720 (lysine 720) is an N6-acetyllysine; alternate. Residue lysine 720 forms a Glycyl lysine isopeptide (Lys-Gly) (interchain with G-Cter in ubiquitin); alternate linkage. Tyrosine 729 is modified (phosphotyrosine). A phosphoserine mark is found at serine 731 and serine 735. The disordered stretch occupies residues 733–752 (VVSGDTSPRHLSNVSSTGSI). A compositionally biased stretch (polar residues) spans 736-751 (GDTSPRHLSNVSSTGS). Position 738 is a phosphothreonine (threonine 738). Residues serine 739, serine 744, serine 751, and serine 757 each carry the phosphoserine modification. At threonine 762 the chain carries Phosphothreonine.

As to quaternary structure, interacts with MARK1, MARK2, MARK3 and MARK4. Interacts with SQSTM1 when polyubiquitinated. Interacts with PSMC2 through SQSTM1. Interacts with FKBP4. Binds to CSNK1D. Interacts with SGK1. Interacts with EPM2A; the interaction dephosphorylates MAPT at Ser-396. Interacts with PIN1. Interacts with LRRK2. Interacts with LRP1, leading to endocytosis; this interaction is reduced in the presence of LRPAP1/RAP. Post-translationally, polyubiquitinated. Requires functional TRAF6 and may provoke SQSTM1-dependent degradation by the proteasome. In terms of processing, phosphorylation at various serine and threonine residues in S-P or T-P motifs by proline-directed protein kinases (PDPK1, CDK1, CDK5, GSK3, MAPK) (a few sites per protein in interphase, more in mitosis), and at serine residues in K-X-G-S motifs by MAP/microtubule affinity-regulating kinase (MARK1, MARK2, MARK3 or MARK4), causing detachment from microtubules, and their disassembly. Phosphorylation at Ser-597 by BRSK1 and BRSK2 in neurons affects ability to bind microtubules and plays a role in neuron polarization. Phosphorylated by PHK. Dephosphorylation at several serine and threonine residues by the serine/threonine phosphatase PPP5C. Phosphorylation at Ser-214 by SGK1 mediates microtubule depolymerization and neurite formation in hippocampal neurons.

It localises to the cytoplasm. Its subcellular location is the cytosol. The protein localises to the cell membrane. The protein resides in the cytoskeleton. It is found in the cell projection. It localises to the axon. Its subcellular location is the dendrite. Its function is as follows. Promotes microtubule assembly and stability, and might be involved in the establishment and maintenance of neuronal polarity. The C-terminus binds axonal microtubules while the N-terminus binds neural plasma membrane components, suggesting that tau functions as a linker protein between both. Axonal polarity is predetermined by tau localization (in the neuronal cell) in the domain of the cell body defined by the centrosome. The short isoforms allow plasticity of the cytoskeleton whereas the longer isoforms may preferentially play a role in its stabilization. This is Microtubule-associated protein tau (MAPT) from Pan troglodytes (Chimpanzee).